Consider the following 418-residue polypeptide: Tyrosine--tRNA ligase 1 (418 aa).

Y34 contributes to the L-tyrosine binding site. The 'HIGH' region signature appears at 39–48 (PTGDSMHIGH). The L-tyrosine site is built by Y166 and Q170. A 'KMSKS' region motif is present at residues 228 to 232 (KFGKT). K231 serves as a coordination point for ATP. The S4 RNA-binding domain occupies 350–416 (KNIVDWLVDT…GKKNYFLAKV (67 aa)).

Belongs to the class-I aminoacyl-tRNA synthetase family. TyrS type 1 subfamily. As to quaternary structure, homodimer.

The protein resides in the cytoplasm. The enzyme catalyses tRNA(Tyr) + L-tyrosine + ATP = L-tyrosyl-tRNA(Tyr) + AMP + diphosphate + H(+). Catalyzes the attachment of tyrosine to tRNA(Tyr) in a two-step reaction: tyrosine is first activated by ATP to form Tyr-AMP and then transferred to the acceptor end of tRNA(Tyr). The protein is Tyrosine--tRNA ligase 1 of Enterococcus faecalis (strain ATCC 700802 / V583).